We begin with the raw amino-acid sequence, 450 residues long: Chitobiosyldiphosphodolichol beta-mannosyltransferase (450 aa).

Over 1–13 (MSWIQIPWSWVVT) the chain is Lumenal. A helical membrane pass occupies residues 14-34 (LIVTYLSLPLIIYYLVPYIFY). Over 35-106 (GNKSSKKRII…PTLTLQGNKR (72 aa)) the chain is Cytoplasmic. The helical intramembrane region spans 107–127 (SIIFLVKKVLFQVSAIIAQLW). Residues 128-450 (ELRGSNYMLI…SAMQELKLVA (323 aa)) lie on the Cytoplasmic side of the membrane.

The protein belongs to the glycosyltransferase group 1 family.

It localises to the endoplasmic reticulum membrane. The catalysed reaction is an N,N'-diacetylchitobiosyl-diphospho-di-trans,poly-cis-dolichol + GDP-alpha-D-mannose = a beta-D-Man-(1-&gt;4)-beta-D-GlcNAc-(1-&gt;4)-alpha-D-GlcNAc-diphospho-di-trans,poly-cis-dolichol + GDP + H(+). It participates in protein modification; protein glycosylation. Participates in the formation of the lipid-linked precursor oligosaccharide for N-glycosylation. Involved in assembling the dolichol-pyrophosphate-GlcNAc(2)-Man(5) intermediate on the cytoplasmic surface of the ER. In Candida glabrata (strain ATCC 2001 / BCRC 20586 / JCM 3761 / NBRC 0622 / NRRL Y-65 / CBS 138) (Yeast), this protein is Chitobiosyldiphosphodolichol beta-mannosyltransferase (ALG1).